Reading from the N-terminus, the 380-residue chain is Putative 8-amino-7-oxononanoate synthase (380 aa).

Arginine 18 serves as a coordination point for substrate. Residue glycine 106–tyrosine 107 coordinates pyridoxal 5'-phosphate. Histidine 131 contacts substrate. Residues serine 179, aspartate 205 to histidine 208, and threonine 236 to lysine 239 each bind pyridoxal 5'-phosphate. Residue lysine 239 is modified to N6-(pyridoxal phosphate)lysine. Threonine 352 contributes to the substrate binding site.

Belongs to the class-II pyridoxal-phosphate-dependent aminotransferase family. BioF subfamily. In terms of assembly, homodimer. Requires pyridoxal 5'-phosphate as cofactor.

It catalyses the reaction 6-carboxyhexanoyl-[ACP] + L-alanine + H(+) = (8S)-8-amino-7-oxononanoate + holo-[ACP] + CO2. Its pathway is cofactor biosynthesis; biotin biosynthesis. Functionally, catalyzes the decarboxylative condensation of pimeloyl-[acyl-carrier protein] and L-alanine to produce 8-amino-7-oxononanoate (AON), [acyl-carrier protein], and carbon dioxide. The polypeptide is Putative 8-amino-7-oxononanoate synthase (bioF) (Neisseria meningitidis serogroup C / serotype 2a (strain ATCC 700532 / DSM 15464 / FAM18)).